We begin with the raw amino-acid sequence, 503 residues long: Ell-associated factor Eaf (503 aa).

Composition is skewed to polar residues over residues proline 143–alanine 158 and glutamate 170–asparagine 189. Disordered stretches follow at residues proline 143–aspartate 223 and asparagine 251–aspartate 503. Serine 199 bears the Phosphoserine mark. The segment covering asparagine 251–serine 264 has biased composition (polar residues). Over residues glycine 281–glutamine 296 the composition is skewed to basic residues. Residues arginine 297 to arginine 311 show a composition bias toward polar residues. The span at asparagine 312–histidine 326 shows a compositional bias: low complexity. The segment covering aspartate 382–glutamate 397 has biased composition (acidic residues). Composition is skewed to low complexity over residues methionine 415–histidine 435 and asparagine 484–serine 497.

It belongs to the EAF family.

Its subcellular location is the nucleus. Its function is as follows. Promotes transcriptional elongation by Su(Tpl)/ELL. Essential for development. In Drosophila ananassae (Fruit fly), this protein is Ell-associated factor Eaf.